Consider the following 329-residue polypeptide: Ficolin-2 (329 aa).

The N-terminal stretch at Met-1–Ala-29 is a signal peptide. The Collagen-like domain maps to Gly-52–Leu-111. Residues Gly-64–Ser-113 are disordered. A compositionally biased stretch (low complexity) spans Leu-77–Lys-90. The Fibrinogen C-terminal domain maps to His-112–Thr-329. 2 disulfides stabilise this stretch: Cys-114–Cys-142 and Cys-121–Cys-149. Asp-265, Asp-267, Ser-269, and Ser-271 together coordinate Ca(2+). The cysteines at positions 273 and 286 are disulfide-linked. N-linked (GlcNAc...) asparagine glycosylation is present at Asn-316.

It belongs to the ficolin lectin family. Homotrimer. Interacts with elastin. Interacts with MASP1 and MASP2.

Its subcellular location is the secreted. In terms of biological role, may function in innate immunity through activation of the lectin complement pathway. Calcium-dependent and GlcNAc-binding lectin. The polypeptide is Ficolin-2 (FCN2) (Bos taurus (Bovine)).